Here is a 305-residue protein sequence, read N- to C-terminus: Aspartate carbamoyltransferase catalytic subunit (305 aa).

Positions 54 and 55 each coordinate carbamoyl phosphate. Lysine 83 serves as a coordination point for L-aspartate. Carbamoyl phosphate contacts are provided by arginine 104, histidine 132, and glutamine 135. L-aspartate contacts are provided by arginine 165 and arginine 226. Positions 265 and 266 each coordinate carbamoyl phosphate.

The protein belongs to the aspartate/ornithine carbamoyltransferase superfamily. ATCase family. In terms of assembly, heterooligomer of catalytic and regulatory chains.

It carries out the reaction carbamoyl phosphate + L-aspartate = N-carbamoyl-L-aspartate + phosphate + H(+). Its pathway is pyrimidine metabolism; UMP biosynthesis via de novo pathway; (S)-dihydroorotate from bicarbonate: step 2/3. In terms of biological role, catalyzes the condensation of carbamoyl phosphate and aspartate to form carbamoyl aspartate and inorganic phosphate, the committed step in the de novo pyrimidine nucleotide biosynthesis pathway. The polypeptide is Aspartate carbamoyltransferase catalytic subunit (Pyrobaculum calidifontis (strain DSM 21063 / JCM 11548 / VA1)).